The following is a 526-amino-acid chain: Chaperonin GroEL 2 (526 aa).

Lys50, Gly413, and Asp494 together coordinate ATP.

This sequence belongs to the chaperonin (HSP60) family. Forms a cylinder of 14 subunits composed of two heptameric rings stacked back-to-back. Interacts with the co-chaperonin GroES.

Its subcellular location is the cytoplasm. It carries out the reaction ATP + H2O + a folded polypeptide = ADP + phosphate + an unfolded polypeptide.. Functionally, together with its co-chaperonin GroES, plays an essential role in assisting protein folding. The GroEL-GroES system forms a nano-cage that allows encapsulation of the non-native substrate proteins and provides a physical environment optimized to promote and accelerate protein folding. In Chlamydia pneumoniae (Chlamydophila pneumoniae), this protein is Chaperonin GroEL 2.